The chain runs to 686 residues: Delta-like protein 4 (686 aa).

Positions 1-27 are cleaved as a signal peptide; that stretch reads MTPGSRSACRWALLLLAVLWPQQRAAG. Over 28 to 530 the chain is Extracellular; sequence SGIFQLRLQE…PVGLPPSFPW (503 aa). 2 cysteine pairs are disulfide-bonded: cysteine 51–cysteine 55 and cysteine 62–cysteine 75. N-linked (GlcNAc...) asparagine glycosylation is found at asparagine 79, asparagine 109, and asparagine 162. The DSL domain occupies 174–218; the sequence is VVCSDNYYGDSCSRLCKKRDDHFGHYECQPDGSLSCLPGWTGKYC. An intrachain disulfide couples cysteine 176 to cysteine 185. Interaction with Notch1 regions lie at residues 186–188 and 192–196; these read SRL and RDDHF. Cystine bridges form between cysteine 189–cysteine 201, cysteine 209–cysteine 218, cysteine 223–cysteine 234, cysteine 227–cysteine 240, cysteine 242–cysteine 251, cysteine 254–cysteine 265, cysteine 260–cysteine 271, cysteine 273–cysteine 282, cysteine 289–cysteine 301, cysteine 295–cysteine 311, cysteine 313–cysteine 322, cysteine 329–cysteine 340, cysteine 334–cysteine 349, cysteine 351–cysteine 360, cysteine 367–cysteine 378, cysteine 372–cysteine 389, cysteine 391–cysteine 400, cysteine 407–cysteine 418, cysteine 412–cysteine 427, cysteine 429–cysteine 438, cysteine 445–cysteine 456, cysteine 450–cysteine 465, cysteine 467–cysteine 476, cysteine 485–cysteine 496, cysteine 490–cysteine 507, and cysteine 509–cysteine 518. EGF-like domains follow at residues 219-252, 256-283, 285-323, 325-361, 363-401, 403-439, 441-477, and 481-519; these read DQPI…PLCN, PHNG…LFCD, DLNY…EHCE, ELSK…QHCE, STLT…SNCE, KVDR…THCE, HISD…RRCE, and TNDA…SRCE. A helical membrane pass occupies residues 531–551; it reads VAVSLGVGLVVLLVLLVMVAV. At 552–686 the chain is on the cytoplasmic side; sequence AVRQLRLRRP…RNECVIATEV (135 aa).

As to quaternary structure, interacts with NOTCH4. Interacts (via N-terminal DSL and MNNL domains) with NOTCH1 (via EGF-like domains).

It is found in the cell membrane. Involved in the Notch signaling pathway as Notch ligand. Activates NOTCH1 and NOTCH4. Involved in angiogenesis; negatively regulates endothelial cell proliferation and migration and angiogenic sprouting. Essential for retinal progenitor proliferation. Required for suppressing rod fates in late retinal progenitors as well as for proper generation of other retinal cell types. During spinal cord neurogenesis, inhibits V2a interneuron fate. The protein is Delta-like protein 4 of Rattus norvegicus (Rat).